A 157-amino-acid polypeptide reads, in one-letter code: tRNA (cytidine(34)-2'-O)-methyltransferase (157 aa).

S-adenosyl-L-methionine is bound by residues Leu-78, Gly-100, Ile-122, and Ser-130.

The protein belongs to the class IV-like SAM-binding methyltransferase superfamily. RNA methyltransferase TrmH family. TrmL subfamily. As to quaternary structure, homodimer.

Its subcellular location is the cytoplasm. The catalysed reaction is cytidine(34) in tRNA + S-adenosyl-L-methionine = 2'-O-methylcytidine(34) in tRNA + S-adenosyl-L-homocysteine + H(+). It carries out the reaction 5-carboxymethylaminomethyluridine(34) in tRNA(Leu) + S-adenosyl-L-methionine = 5-carboxymethylaminomethyl-2'-O-methyluridine(34) in tRNA(Leu) + S-adenosyl-L-homocysteine + H(+). In terms of biological role, methylates the ribose at the nucleotide 34 wobble position in the two leucyl isoacceptors tRNA(Leu)(CmAA) and tRNA(Leu)(cmnm5UmAA). Catalyzes the methyl transfer from S-adenosyl-L-methionine to the 2'-OH of the wobble nucleotide. This is tRNA (cytidine(34)-2'-O)-methyltransferase from Escherichia coli O6:H1 (strain CFT073 / ATCC 700928 / UPEC).